A 273-amino-acid chain; its full sequence is XIAP-associated factor 1 (273 aa).

Residues 22-80 (LHEAHCLRFIVLCPECEEPIPESKMKEHMEVVHQQTKESQQHPAKCKFCELAVQLSNLD) form a TRAF-type zinc finger. Residues 181–228 (GNRRSTVSKDVRPKTKNRNSSTKRETKKQNGTVALPLKSGLQQRADLP) form a disordered region.

In terms of assembly, interacts with BIRC1, BIRC2, BIRC3, BIRC4, BIRC7 and BIRC8. Part of an complex consisting of BIRC4, XAF1 and BIRC5; the complex formation requires IFN-beta stimulation. Interacts with RNF114, the interaction increases XAF1 stability and proapoptotic effects, and may regulate IFN signaling.

The protein localises to the cytoplasm. The protein resides in the nucleus. It is found in the mitochondrion. Functionally, seems to function as a negative regulator of members of the IAP (inhibitor of apoptosis protein) family. Inhibits anti-caspase activity of BIRC4. Induces cleavage and inactivation of BIRC4 independent of caspase activation. Mediates TNF-alpha-induced apoptosis and is involved in apoptosis in trophoblast cells. May inhibit BIRC4 indirectly by activating the mitochondrial apoptosis pathway. After translocation to mitochondria, promotes translocation of BAX to mitochondria and cytochrome c release from mitochondria. Seems to promote the redistribution of BIRC4 from the cytoplasm to the nucleus, probably independent of BIRC4 inactivation which seems to occur in the cytoplasm. The BIRC4-XAF1 complex mediates down-regulation of BIRC5/survivin; the process requires the E3 ligase activity of BIRC4. Seems to be involved in cellular sensitivity to the proapoptotic actions of TRAIL. May be a tumor suppressor by mediating apoptosis resistance of cancer cells. This Mus musculus (Mouse) protein is XIAP-associated factor 1 (Xaf1).